Consider the following 367-residue polypeptide: Peptide chain release factor 2 (367 aa).

The residue at position 254 (glutamine 254) is an N5-methylglutamine.

This sequence belongs to the prokaryotic/mitochondrial release factor family. In terms of processing, methylated by PrmC. Methylation increases the termination efficiency of RF2.

It is found in the cytoplasm. Peptide chain release factor 2 directs the termination of translation in response to the peptide chain termination codons UGA and UAA. The polypeptide is Peptide chain release factor 2 (Leptospira interrogans serogroup Icterohaemorrhagiae serovar Lai (strain 56601)).